A 117-amino-acid chain; its full sequence is Prefoldin subunit beta (117 aa).

The protein belongs to the prefoldin subunit beta family. Heterohexamer of two alpha and four beta subunits.

It localises to the cytoplasm. Functionally, molecular chaperone capable of stabilizing a range of proteins. Seems to fulfill an ATP-independent, HSP70-like function in archaeal de novo protein folding. The protein is Prefoldin subunit beta of Thermococcus gammatolerans (strain DSM 15229 / JCM 11827 / EJ3).